A 177-amino-acid chain; its full sequence is Adenine phosphoribosyltransferase (177 aa).

This sequence belongs to the purine/pyrimidine phosphoribosyltransferase family. Homodimer.

It is found in the cytoplasm. The enzyme catalyses AMP + diphosphate = 5-phospho-alpha-D-ribose 1-diphosphate + adenine. It participates in purine metabolism; AMP biosynthesis via salvage pathway; AMP from adenine: step 1/1. Functionally, catalyzes a salvage reaction resulting in the formation of AMP, that is energically less costly than de novo synthesis. In Acidothermus cellulolyticus (strain ATCC 43068 / DSM 8971 / 11B), this protein is Adenine phosphoribosyltransferase.